We begin with the raw amino-acid sequence, 298 residues long: Probable endonuclease 4 (298 aa).

Zn(2+)-binding residues include histidine 69, histidine 111, glutamate 146, aspartate 180, histidine 183, histidine 215, aspartate 228, histidine 230, and glutamate 260.

The protein belongs to the AP endonuclease 2 family. It depends on Zn(2+) as a cofactor.

The enzyme catalyses Endonucleolytic cleavage to 5'-phosphooligonucleotide end-products.. In terms of biological role, endonuclease IV plays a role in DNA repair. It cleaves phosphodiester bonds at apurinic or apyrimidinic (AP) sites, generating a 3'-hydroxyl group and a 5'-terminal sugar phosphate. This Bacillus mycoides (strain KBAB4) (Bacillus weihenstephanensis) protein is Probable endonuclease 4.